The following is an 84-amino-acid chain: Acyl-CoA-binding protein (84 aa).

Residues 1–84 (MTTFEEAAQK…LYEQLATKYA (84 aa)) form the ACB domain. Residues Lys-12, 27–31 (YGLYK), Lys-53, and Tyr-72 each bind an acyl-CoA.

It belongs to the ACBP family. In terms of assembly, interacts with dhkA.

Its function is as follows. Binds to acyl-CoA. Processed into the SDF-2 (spore differentiation factor 2) a peptide which triggers sporulation. SDF-2 appears to stimulate prestalk cells to release additional SDF-2 by acting through a signal transduction pathway that also involves dhkA, regA and PKA. Induces encapsulation of prespore cells in a dhkA-dependent manner. GABA induces the release of acbA from prespore cells and induces the exposure of tagC on the surface of prestalk cells where it can convert acbA to SDF-2. Glutamate acts as a competitive inhibitor and is also able to inhibit induction of sporulation by SDF-2. This chain is Acyl-CoA-binding protein (acbA), found in Dictyostelium discoideum (Social amoeba).